We begin with the raw amino-acid sequence, 1653 residues long: Protein strawberry notch (1653 aa).

Disordered stretches follow at residues 1 to 46 (MTSK…GRDL), 190 to 211 (GSPAARSSGNAGTTGSSQGGAI), 237 to 265 (GSNAPPPPPPSTAANSVRHSPTGGIPNPG), 317 to 345 (NNQKPPPIATTPGSGGPAGGAPGSGVKGN), and 883 to 1043 (SVAD…PSGS). Acidic residues predominate over residues 11–36 (DADDDNDNFDEDDSGSDFDDDEDPDQ). 2 positions are modified to phosphoserine: serine 24 and serine 26. Residues 194–205 (ARSSGNAGTTGS) are compositionally biased toward polar residues. Positions 256 to 265 (SPTGGIPNPG) are enriched in low complexity. The segment covering 329–342 (GSGGPAGGAPGSGV) has biased composition (gly residues). Low complexity predominate over residues 883–901 (SVADSTSSLSNNSNITTAA). A phosphoserine mark is found at serine 929 and serine 931. Over residues 966–975 (IDDEDEDHDV) the composition is skewed to acidic residues. A compositionally biased stretch (polar residues) spans 980-998 (RSVASDASSDFNPFFSGSD). Basic residues predominate over residues 1008-1027 (RSKKSKKAQKKSKKKVKKEK). Residues 1064–1125 (LSTQDKIQDL…RKIERLGARL (62 aa)) are a coiled coil.

Belongs to the SBNO family. In terms of assembly, interacts with vg for function in the wing disk. Interacts with Su(H) for function in the eye disk. In terms of tissue distribution, at stage 8, when the formation of the midline precursor cells depends on Notch signaling, high level of expression is seen in the midline precursor cells and a lower level in the surrounding epidermal cells. Between stages 11 and 14, expression is uniform throughout the epidermis, and at stage 16, high level of expression is restricted to the central nervous system. Expressed in the larval leg, wing and eye imaginal disks. Expression is over the wing disk and accumulates within the pleural region.

It localises to the nucleus. Functionally, notch pathway component, may contribute to the specificity between lateral and inductive Notch signaling pathways in the wing disk. Required during many developmental stages including oogenesis, embryogenesis and imaginal development of the eye, wing and leg. Ebi and sno regulate EGFR-dependent Delta transcription in the developing eye, by antagonizing a repressor function of Suppressor of Hairless (Su(H)). They are required in the R-cells for normal cone cell development. The protein is Protein strawberry notch of Drosophila melanogaster (Fruit fly).